Here is a 346-residue protein sequence, read N- to C-terminus: MSGSSKQPHAKGKTLIIEDDCEAEALDEANPFSFKEFVKSQTFPGFVSSNSKRAFSKDSNQSTTQFRGPSECPDGNLEFQETYFRDPTLYDDLQEDEDDDWSGSYHPSVIENTHGPKVPSPAGTDGDESYGYGASDMSGDGLITGWQQAVLPSPPAGLHGKTQHRPDSTSDSEEGLRLLQINCEELQEENLHLKSKICKLKELNDSQNEKVRQLERKLEERILEEQKEAQDLESMVQQVEKNLQMMTKRAAKAEGNVTKLKQEMALLQIELTTYKAENEALRRGETAGMNAVKQNSNLALENLQKVVSGAQSSIKQLVAGAEALTLVAELLRSIDKIAEIHNDGVP.

The span at 46-67 (FVSSNSKRAFSKDSNQSTTQFR) shows a compositional bias: polar residues. Disordered regions lie at residues 46 to 77 (FVSS…DGNL), 93 to 129 (LQED…GDES), and 153 to 173 (SPPA…SDSE). The stretch at 170-317 (SDSEEGLRLL…SGAQSSIKQL (148 aa)) forms a coiled coil.

Belongs to the ENTR1 family.

The protein localises to the cytoplasm. Its subcellular location is the early endosome. It is found in the endosome. The protein resides in the recycling endosome. It localises to the midbody. The protein localises to the cytoskeleton. Its subcellular location is the microtubule organizing center. It is found in the centrosome. The protein resides in the cilium basal body. In terms of biological role, endosome-associated protein that plays a role in membrane receptor sorting, cytokinesis and ciliogenesis. In Xenopus tropicalis (Western clawed frog), this protein is Endosome-associated-trafficking regulator 1.